The chain runs to 564 residues: Juvenile hormone esterase (564 aa).

Residues 1–19 (MTSHVLALAFLLHACTALA) form the signal peptide. N-linked (GlcNAc...) asparagine glycosylation occurs at Asn-81. The cysteines at positions 89 and 109 are disulfide-linked. The N-linked (GlcNAc...) asparagine glycan is linked to Asn-180. Ser-220 acts as the Acyl-ester intermediate in catalysis. Glu-351 acts as the Charge relay system in catalysis. N-linked (GlcNAc...) asparagine glycosylation occurs at Asn-402. His-465 functions as the Charge relay system in the catalytic mechanism. Residue Asn-515 is glycosylated (N-linked (GlcNAc...) asparagine).

This sequence belongs to the type-B carboxylesterase/lipase family.

It catalyses the reaction juvenile hormone I + H2O = juvenile hormone I carboxylate + methanol + H(+). The enzyme catalyses juvenile hormone III + H2O = juvenile hormone III carboxylate + methanol + H(+). Functionally, JH esterase plays a crucial role in the decrease of JH activity in lepidopteran insects, by hydrolyzing the methyl ester of JH. It is also involved in the transport of JH. The protein is Juvenile hormone esterase of Heliothis virescens (Tobacco budworm moth).